The chain runs to 155 residues: Large ribosomal subunit protein uL30 (155 aa).

The protein belongs to the universal ribosomal protein uL30 family. As to quaternary structure, part of the 50S ribosomal subunit.

The chain is Large ribosomal subunit protein uL30 from Nanoarchaeum equitans (strain Kin4-M).